Reading from the N-terminus, the 4138-residue chain is Fumosorinone synthetase (4138 aa).

Residues 15 to 455 (PEPIAIVGSA…GTNAHAIIER (441 aa)) form the Ketosynthase family 3 (KS3) domain. Active-site for beta-ketoacyl synthase activity residues include Cys189, His328, and His375. The tract at residues 590–921 (VFTGQGAQWP…APDAVSFSTA (332 aa)) is malonyl-CoA:ACP transacylase (MAT) domain. Residues 990–1133 (HELLGRRAVD…GLIDVHLGPR (144 aa)) form an N-terminal hotdog fold region. The dehydratase (DH) domain stretch occupies residues 990–1306 (HELLGRRAVD…GFEVRSVGER (317 aa)). In terms of domain architecture, PKS/mFAS DH spans 990–1309 (HELLGRRAVD…VRSVGERDAA (320 aa)). The Proton acceptor; for dehydratase activity role is filled by His1022. The interval 1157 to 1309 (LQEIDCEKLY…VRSVGERDAA (153 aa)) is C-terminal hotdog fold. Asp1216 serves as the catalytic Proton donor; for dehydratase activity. The segment at 1456–1650 (RFYAEDKGMQ…FSGADHVAHD (195 aa)) is methyltransferase (MT) domain. The tract at residues 2205 to 2379 (TYLMVGAAGG…AASIIHVGFV (175 aa)) is ketoreductase (KR) domain. One can recognise a Carrier 1 domain in the interval 2507–2587 (EAAAAVRRAF…QLSTLAAKLA (81 aa)). An O-(pantetheine 4'-phosphoryl)serine modification is found at Ser2547. A disordered region spans residues 2587–2683 (ARQQSPRKEG…TEPKTEDKVS (97 aa)). The span at 2610–2621 (TQDKLVDDKEQK) shows a compositional bias: basic and acidic residues. Polar residues predominate over residues 2622–2643 (VQVTSSLAKADSLTQEMQASAH). Over residues 2647–2659 (DSATNPTPSSTAS) the composition is skewed to low complexity. Residues 2664–2675 (SNSQSTRSTSTE) are compositionally biased toward polar residues. The condensation (C) domain stretch occupies residues 2701-3128 (REAPMSAAQA…ASQRVRECAV (428 aa)). Residues 3162-3564 (CQKNSARTAI…DGTLLCFGRI (403 aa)) are adenylation (A) (KR) domain. Residues 3680 to 3759 (EKMTIQEGEL…GMTRCVLAQR (80 aa)) form the Carrier 2 domain. Ser3719 carries the post-translational modification O-(pantetheine 4'-phosphoryl)serine. The reductase (RED) domain stretch occupies residues 3813–4045 (LTGATGFLGG…LDFGTVDAVV (233 aa)).

It in the C-terminal section; belongs to the NRP synthetase family.

Its function is as follows. Hybrid PKS-NRPS synthetase; part of the gene cluster that mediates the biosynthesis of fumosorinone, a 2-pyridone alkaloid that acts as an inhibitor of protein tyrosine phosphatase 1B which is implicated asa negative regulator of insulin receptor signaling and a potential drug target for the treatment of type II diabetes and other associated metabolic syndromes. The polyketide-amino acid backbone of fumosorinone is first assembled by the PKS-NRPS hybrid fumoS. The PKS modules condense one acetyl-CoA starter unit with 7 malonyl-CoA units, programmed C-methylations occurring after the first 3 and the sixth extensions, and cycles of full reduction occurring after the first 2 extensions. Because fumoS lacks a designated enoyl reductase (ER) domain, the required activity is provided the enoyl reductase fumoC. Upon formation of the polyketide backbone on the thiotemplate, the polyketide is transferred to the NRPS module and linked to tyrosine to produce the acyltetramic acid intermediate called prefumosorinone A. The cytochrome P450 monooxygenase fumoA then probably catalyzes an unprecedented oxidative ring expansion of prefumosorinone A to form prefumosorinone B which contains the 2-pyridone core of fumosorinone. The cytochrome P450 monooxygenase fumoB might hydroxylate the nitrogen of prefumosorinone B, but not the acyltetramic acid prefumosorinone A, to form fumosorinone. The sequence is that of Fumosorinone synthetase from Cordyceps fumosorosea (strain ARSEF 2679) (Isaria fumosorosea).